The chain runs to 242 residues: Eukaryotic translation initiation factor 3 subunit J (242 aa).

The span at 1-10 (MASWDDEDFE) shows a compositional bias: acidic residues. Disordered stretches follow at residues 1–58 (MASW…KAQR), 71–97 (MKLKPEDASTKRDRQRQAELDSDMMNA), and 201–242 (REEK…DDFM). The segment covering 11–21 (VPAAATPAVPA) has biased composition (low complexity). Positions 23-38 (WDDDEEEDVMDSWDAE) are enriched in acidic residues. Residues 71 to 89 (MKLKPEDASTKRDRQRQAE) show a composition bias toward basic and acidic residues.

It belongs to the eIF-3 subunit J family. In terms of assembly, component of the eukaryotic translation initiation factor 3 (eIF-3) complex.

The protein localises to the cytoplasm. Component of the eukaryotic translation initiation factor 3 (eIF-3) complex, which is involved in protein synthesis of a specialized repertoire of mRNAs and, together with other initiation factors, stimulates binding of mRNA and methionyl-tRNAi to the 40S ribosome. The eIF-3 complex specifically targets and initiates translation of a subset of mRNAs involved in cell proliferation. The chain is Eukaryotic translation initiation factor 3 subunit J from Yarrowia lipolytica (strain CLIB 122 / E 150) (Yeast).